Consider the following 397-residue polypeptide: Alpha-2B adrenergic receptor (397 aa).

Residues 1–25 (AIAAIIIFLILFTIFGNALVILAVL) form a helical membrane-spanning segment. Residues 26-36 (TSRSLRAPQNL) are Cytoplasmic-facing. The helical transmembrane segment at 37-62 (FLVSLAAADILVATLIIPFSLANELL) threads the bilayer. The Extracellular segment spans residues 63–72 (GYWYFRRMWC). Cys-72 and Cys-151 are joined by a disulfide. Residues 73-95 (KVYLALDVLFCTSSIVHLCAISL) traverse the membrane as a helical segment. Topologically, residues 96–117 (DRYWAVSRALEYNSKRTPRRIK) are cytoplasmic. Residues 118-140 (CIILMVWLIAAVISLPSLVYKGD) traverse the membrane as a helical segment. Residues 141-156 (QGPQPSGAPQCNLNQE) are Extracellular-facing. Residues 157-180 (TWYILASSIGSFFAPCLIMILVYL) traverse the membrane as a helical segment. Over 181 to 361 (RIYLIAKRSH…LSREKRFTFV (181 aa)) the chain is Cytoplasmic. Disordered regions lie at residues 193–212 (GPRAKGAPGKSKFKQSRQVP) and 230–319 (AAGE…LQQP). The segment covering 280 to 300 (SLEEEAEEEEEGEEEREEECE) has biased composition (acidic residues). Positions 301–319 (PQALPASPASACSPPLQQP) are enriched in low complexity. Residues 362-385 (LAVVIGVFVLCWFPFFFSYSLGAI) traverse the membrane as a helical segment. The Extracellular portion of the chain corresponds to 386 to 394 (CPQQCKVPH). Residues 395 to 397 (DLF) form a helical membrane-spanning segment.

The protein belongs to the G-protein coupled receptor 1 family. Adrenergic receptor subfamily. ADRA2B sub-subfamily. In terms of assembly, interacts with RAB26. Interacts with PPP1R9B.

Its subcellular location is the cell membrane. Functionally, alpha-2 adrenergic receptors mediate the catecholamine-induced inhibition of adenylate cyclase through the action of G proteins. This Talpa europaea (European mole) protein is Alpha-2B adrenergic receptor (ADRA2B).